The primary structure comprises 139 residues: Small ribosomal subunit protein uS11 (139 aa).

Positions 117–139 (VEDVTPIPHDGTRPKGGRRGRRV) are disordered.

Belongs to the universal ribosomal protein uS11 family. Part of the 30S ribosomal subunit.

Its function is as follows. Located on the platform of the 30S subunit. The chain is Small ribosomal subunit protein uS11 from Thermococcus onnurineus (strain NA1).